Reading from the N-terminus, the 716-residue chain is Calpain-1 catalytic subunit (716 aa).

Positions Leu-55–Thr-354 constitute a Calpain catalytic domain. Ca(2+) contacts are provided by Gln-109 and Asp-114. Residues Cys-115, His-272, and Asn-296 contribute to the active site. The Ca(2+) site is built by Asp-318 and Glu-323. Thr-354 is modified (phosphothreonine). A domain III region spans residues Pro-355 to Asp-528. The segment at Gln-529–Glu-544 is linker. EF-hand domains are found at residues Glu-543–Lys-578, Phe-587–Arg-620, Asn-617–Lys-652, and Val-682–Ala-716. Residues Ile-545–Phe-715 are domain IV. 10 residues coordinate Ca(2+): Asp-600, Asp-602, Asn-604, Lys-606, Glu-611, Asp-630, Asp-632, Ser-634, Ser-636, and Glu-641.

The protein belongs to the peptidase C2 family. As to quaternary structure, forms a heterodimer with a small (regulatory) subunit CAPNS1. It depends on Ca(2+) as a cofactor. In terms of processing, undergoes calcium-induced successive autoproteolytic cleavages that generate a membrane-bound 78 kDa active form and an intracellular 75 kDa active form. Calpastatin reduces with high efficiency the transition from 78 kDa to 75 kDa calpain forms.

The protein resides in the cytoplasm. Its subcellular location is the cell membrane. It carries out the reaction Broad endopeptidase specificity.. Its activity is regulated as follows. Activated by micromolar concentrations of calcium and inhibited by calpastatin. Its function is as follows. Calcium-regulated non-lysosomal thiol-protease which catalyzes limited proteolysis of substrates involved in cytoskeletal remodeling and signal transduction. Proteolytically cleaves CTBP1. Cleaves and activates caspase-7 (CASP7). This chain is Calpain-1 catalytic subunit, found in Bos taurus (Bovine).